The primary structure comprises 347 residues: NADH-ubiquinone oxidoreductase chain 2 (347 aa).

Transmembrane regions (helical) follow at residues 1–21, 59–79, 93–115, 149–169, 178–198, 201–221, 239–259, 274–294, and 325–345; these read MNPF…MIVM, YFMT…INLL, TASM…HFWV, INPN…GWGG, IMAY…IYNP, TILN…MFAL, IITT…PLTG, DSII…YFYM, and LLPT…MLVV.

The protein belongs to the complex I subunit 2 family. As to quaternary structure, core subunit of respiratory chain NADH dehydrogenase (Complex I) which is composed of 45 different subunits. Interacts with TMEM242.

The protein localises to the mitochondrion inner membrane. It catalyses the reaction a ubiquinone + NADH + 5 H(+)(in) = a ubiquinol + NAD(+) + 4 H(+)(out). Functionally, core subunit of the mitochondrial membrane respiratory chain NADH dehydrogenase (Complex I) which catalyzes electron transfer from NADH through the respiratory chain, using ubiquinone as an electron acceptor. Essential for the catalytic activity and assembly of complex I. This chain is NADH-ubiquinone oxidoreductase chain 2, found in Hippopotamus amphibius (Hippopotamus).